The sequence spans 101 residues: Integration host factor subunit alpha (101 aa).

Positions 49–70 (FGNFQLRDKPQRPGRNPKTGEE) are disordered.

It belongs to the bacterial histone-like protein family. In terms of assembly, heterodimer of an alpha and a beta chain.

Its function is as follows. This protein is one of the two subunits of integration host factor, a specific DNA-binding protein that functions in genetic recombination as well as in transcriptional and translational control. This Nitrosospira multiformis (strain ATCC 25196 / NCIMB 11849 / C 71) protein is Integration host factor subunit alpha.